The sequence spans 456 residues: Kynurenine 3-monooxygenase (456 aa).

Belongs to the aromatic-ring hydroxylase family. KMO subfamily. The cofactor is FAD.

It catalyses the reaction L-kynurenine + NADPH + O2 + H(+) = 3-hydroxy-L-kynurenine + NADP(+) + H2O. It participates in cofactor biosynthesis; NAD(+) biosynthesis; quinolinate from L-kynurenine: step 1/3. Catalyzes the hydroxylation of L-kynurenine (L-Kyn) to form 3-hydroxy-L-kynurenine (L-3OHKyn). Required for synthesis of quinolinic acid. This chain is Kynurenine 3-monooxygenase, found in Xanthomonas campestris pv. campestris (strain B100).